Consider the following 850-residue polypeptide: Trimethylamine-N-oxide reductase (850 aa).

Residues 1-39 (MKNKDSLHVSRRRFLAQLGGLTVAGMLGPSLLTPRSARA) constitute a signal peptide (tat-type signal). Ser-191 contributes to the Mo-bis(molybdopterin guanine dinucleotide) binding site.

This sequence belongs to the prokaryotic molybdopterin-containing oxidoreductase family. Requires Mo-bis(molybdopterin guanine dinucleotide) as cofactor. Predicted to be exported by the Tat system. The position of the signal peptide cleavage has not been experimentally proven.

It localises to the periplasm. It catalyses the reaction trimethylamine + 2 Fe(III)-[cytochrome c] + H2O = trimethylamine N-oxide + 2 Fe(II)-[cytochrome c] + 3 H(+). Reduces trimethylamine-N-oxide (TMAO) into trimethylamine; an anaerobic reaction coupled to energy-yielding reactions. This is Trimethylamine-N-oxide reductase (torA) from Salmonella typhi.